The primary structure comprises 144 residues: Large ribosomal subunit protein uL15 (144 aa).

The tract at residues 20-49 (GRGIGSGLGKTGGRGHKGQKSRSGGFHKVG) is disordered. Gly residues predominate over residues 21–31 (RGIGSGLGKTG).

The protein belongs to the universal ribosomal protein uL15 family. As to quaternary structure, part of the 50S ribosomal subunit.

Functionally, binds to the 23S rRNA. This chain is Large ribosomal subunit protein uL15, found in Neisseria meningitidis serogroup C (strain 053442).